The following is a 242-amino-acid chain: Pyridoxine 5'-phosphate synthase (242 aa).

N6 provides a ligand contact to 3-amino-2-oxopropyl phosphate. Residue 8 to 9 (DH) coordinates 1-deoxy-D-xylulose 5-phosphate. R17 serves as a coordination point for 3-amino-2-oxopropyl phosphate. H42 serves as the catalytic Proton acceptor. 1-deoxy-D-xylulose 5-phosphate contacts are provided by R44 and H49. Catalysis depends on E69, which acts as the Proton acceptor. T99 is a binding site for 1-deoxy-D-xylulose 5-phosphate. The active-site Proton donor is H190. 3-amino-2-oxopropyl phosphate is bound by residues G191 and 212–213 (GH).

This sequence belongs to the PNP synthase family. As to quaternary structure, homooctamer; tetramer of dimers.

It localises to the cytoplasm. It carries out the reaction 3-amino-2-oxopropyl phosphate + 1-deoxy-D-xylulose 5-phosphate = pyridoxine 5'-phosphate + phosphate + 2 H2O + H(+). The protein operates within cofactor biosynthesis; pyridoxine 5'-phosphate biosynthesis; pyridoxine 5'-phosphate from D-erythrose 4-phosphate: step 5/5. Its function is as follows. Catalyzes the complicated ring closure reaction between the two acyclic compounds 1-deoxy-D-xylulose-5-phosphate (DXP) and 3-amino-2-oxopropyl phosphate (1-amino-acetone-3-phosphate or AAP) to form pyridoxine 5'-phosphate (PNP) and inorganic phosphate. This is Pyridoxine 5'-phosphate synthase from Neisseria meningitidis serogroup C.